A 521-amino-acid chain; its full sequence is Vang-like protein 2 (521 aa).

Residues methionine 1–histidine 81 are disordered. Residues methionine 1–glycine 108 are Cytoplasmic-facing. Residues glycine 15 to lysine 33 are compositionally biased toward basic residues. The span at glutamate 57 to asparagine 67 shows a compositional bias: basic and acidic residues. Residues glycine 69–histidine 81 are compositionally biased toward low complexity. The helical transmembrane segment at valine 109 to leucine 129 threads the bilayer. The Extracellular portion of the chain corresponds to proline 130–glycine 147. A helical transmembrane segment spans residues leucine 148 to phenylalanine 168. The Cytoplasmic portion of the chain corresponds to arginine 169–valine 178. Residues phenylalanine 179 to phenylalanine 199 form a helical membrane-spanning segment. Residues tyrosine 200–glutamine 217 are Extracellular-facing. A helical transmembrane segment spans residues phenylalanine 218 to glutamate 238. At leucine 239–valine 521 the chain is on the cytoplasmic side.

This sequence belongs to the Vang family. As to quaternary structure, homodimer and heterodimer with Vangl1. Interacts through its C-terminal region with the N-terminal half of DVL1, DVL2 and DVL3. The PDZ domain of DVL1, DVL2 and DVL3 is required for the interaction. Variants Glu-255 and Asn-464 impair interaction with the DVL proteins. Also interacts with the PDZ domains of MAGI3, SCRIB/SCRB1 and FZD3. Interacts with PRICKLE3. As to expression, primarily expressed in the brain and epididymis. Not detected in the cochlea of Lp mice.

It is found in the cell membrane. Involved in the control of early morphogenesis and patterning of both axial midline structures and the development of neural plate. Plays a role in the regulation of planar cell polarity, particularly in the orientation of stereociliary bundles in the cochlea. Required for polarization and movement of myocardializing cells in the outflow tract and seems to act via RHOA signaling to regulate this process. Required for cell surface localization of FZD3 and FZD6 in the inner ear. This Mus musculus (Mouse) protein is Vang-like protein 2 (Vangl2).